Reading from the N-terminus, the 97-residue chain is Mitochondrial import inner membrane translocase subunit Tim8 A (97 aa).

Positions 43-66 match the Twin CX3C motif motif; that stretch reads CWEKCMDKPGPKLDSRAEACFVNC. 2 disulfides stabilise this stretch: cysteine 43–cysteine 66 and cysteine 47–cysteine 62. Phosphoserine occurs at positions 57, 87, 94, and 96.

This sequence belongs to the small Tim family. As to quaternary structure, heterohexamer; composed of 3 copies of TIMM8A and 3 copies of TIMM13, named soluble 70 kDa complex. Associates with the TIM22 complex, whose core is composed of TIMM22.

The protein resides in the mitochondrion inner membrane. Functionally, mitochondrial intermembrane chaperone that participates in the import and insertion of some multi-pass transmembrane proteins into the mitochondrial inner membrane. Also required for the transfer of beta-barrel precursors from the TOM complex to the sorting and assembly machinery (SAM complex) of the outer membrane. Acts as a chaperone-like protein that protects the hydrophobic precursors from aggregation and guide them through the mitochondrial intermembrane space. The TIMM8-TIMM13 complex mediates the import of proteins such as TIMM23, SLC25A12/ARALAR1 and SLC25A13/ARALAR2, while the predominant TIMM9-TIMM10 70 kDa complex mediates the import of much more proteins. The protein is Mitochondrial import inner membrane translocase subunit Tim8 A (Timm8a) of Rattus norvegicus (Rat).